The following is a 160-amino-acid chain: Non-secretory ribonuclease (160 aa).

The N-terminal stretch at 1 to 27 (MVPKLFTSQICLLLLLGLMGVEGSLHA) is a signal peptide. Residue Trp-34 is glycosylated (C-linked (Man) tryptophan). The active-site Proton acceptor is His-42. Asn-44 carries an N-linked (GlcNAc...) asparagine glycan. 4 disulfide bridges follow: Cys-50-Cys-110, Cys-64-Cys-122, Cys-82-Cys-137, and Cys-89-Cys-98. A 3'-nitrotyrosine modification is found at Tyr-60. Residue 65–69 (KNQNT) participates in substrate binding. Asn-92, Asn-111, and Asn-138 each carry an N-linked (GlcNAc...) asparagine glycan. His-155 functions as the Proton donor in the catalytic mechanism.

The protein belongs to the pancreatic ribonuclease family. In terms of assembly, interacts with and forms a tight 1:1 complex with RNH1. Dimerization of two such complexes may occur.

It is found in the lysosome. The protein resides in the cytoplasmic granule. The enzyme catalyses an [RNA] containing cytidine + H2O = an [RNA]-3'-cytidine-3'-phosphate + a 5'-hydroxy-ribonucleotide-3'-[RNA].. It carries out the reaction an [RNA] containing uridine + H2O = an [RNA]-3'-uridine-3'-phosphate + a 5'-hydroxy-ribonucleotide-3'-[RNA].. Functionally, this is a non-secretory ribonuclease. It is a pyrimidine specific nuclease with a slight preference for U. Cytotoxin and helminthotoxin. Possesses a wide variety of biological activities. The protein is Non-secretory ribonuclease (RNASE2) of Macaca fascicularis (Crab-eating macaque).